The sequence spans 189 residues: Probable chorismate pyruvate-lyase (189 aa).

3 residues coordinate substrate: Arg77, Leu115, and Glu174.

It belongs to the UbiC family.

It localises to the cytoplasm. The enzyme catalyses chorismate = 4-hydroxybenzoate + pyruvate. Its pathway is cofactor biosynthesis; ubiquinone biosynthesis. Its function is as follows. Removes the pyruvyl group from chorismate, with concomitant aromatization of the ring, to provide 4-hydroxybenzoate (4HB) for the ubiquinone pathway. This chain is Probable chorismate pyruvate-lyase, found in Shewanella sp. (strain MR-7).